The sequence spans 133 residues: Small ribosomal subunit protein bS6 (133 aa).

Belongs to the bacterial ribosomal protein bS6 family.

Binds together with bS18 to 16S ribosomal RNA. In Chlorobium luteolum (strain DSM 273 / BCRC 81028 / 2530) (Pelodictyon luteolum), this protein is Small ribosomal subunit protein bS6.